Consider the following 476-residue polypeptide: Homeobox even-skipped homolog protein 2 (476 aa).

Disordered regions lie at residues 82 to 113 (TGSESTVSSEISSAAESRKKPGHYSEAAAEAD) and 142 to 185 (KGYA…GSGA). 2 stretches are compositionally biased toward low complexity: residues 84–96 (SESTVSSEISSAA) and 147–159 (SGSAAGTTTSASG). Over residues 160–183 (SGLGSLHGGSGGSGGSAALGGSGS) the composition is skewed to gly residues. A DNA-binding region (homeobox) is located at residues 188-247 (VRRYRTAFTREQIARLEKEFYRENYVSRPRRCELAAALNLPETTIKVWFQNRRMKDKRQR).

This sequence belongs to the even-skipped homeobox family.

Its subcellular location is the nucleus. The chain is Homeobox even-skipped homolog protein 2 (EVX2) from Homo sapiens (Human).